Reading from the N-terminus, the 512-residue chain is Cobyric acid synthase (512 aa).

One can recognise a GATase cobBQ-type domain in the interval 254–455 (EIDIAVVKLP…LHGLFDNKAL (202 aa)). The active-site Nucleophile is C335. Residue H447 is part of the active site.

Belongs to the CobB/CobQ family. CobQ subfamily.

It participates in cofactor biosynthesis; adenosylcobalamin biosynthesis. Its function is as follows. Catalyzes amidations at positions B, D, E, and G on adenosylcobyrinic A,C-diamide. NH(2) groups are provided by glutamine, and one molecule of ATP is hydrogenolyzed for each amidation. This is Cobyric acid synthase from Desulforamulus reducens (strain ATCC BAA-1160 / DSM 100696 / MI-1) (Desulfotomaculum reducens).